Consider the following 185-residue polypeptide: MISSNDLRPGVSVEIDGAPYKVIEFLHVKPGKGAAFVRTKLKNMQTGNVVEKTFRAGETLPAATIEKVEMQYLYAEGNNLVFMDMETYEQAPITAAQIGSAVKYLKENMQVSILRWNGQVIDVELPNTVVLEVVETDPGVKGDTATGGTKPAKLETGAEIQVPLFIKVGERIRVDTRTDTYLGRE.

Belongs to the elongation factor P family.

The protein resides in the cytoplasm. The protein operates within protein biosynthesis; polypeptide chain elongation. Its function is as follows. Involved in peptide bond synthesis. Stimulates efficient translation and peptide-bond synthesis on native or reconstituted 70S ribosomes in vitro. Probably functions indirectly by altering the affinity of the ribosome for aminoacyl-tRNA, thus increasing their reactivity as acceptors for peptidyl transferase. This Synechococcus sp. (strain JA-2-3B'a(2-13)) (Cyanobacteria bacterium Yellowstone B-Prime) protein is Elongation factor P.